The sequence spans 452 residues: Maltoporin (452 aa).

An N-terminal signal peptide occupies residues 1–25 (MMITLRKLPLAVAVAAGVMSAQAMA).

The protein belongs to the porin LamB (TC 1.B.3) family. As to quaternary structure, homotrimer formed of three 18-stranded antiparallel beta-barrels, containing three independent channels.

Its subcellular location is the cell outer membrane. It carries out the reaction beta-maltose(in) = beta-maltose(out). Its function is as follows. Involved in the transport of maltose and maltodextrins. The polypeptide is Maltoporin (Salmonella paratyphi A (strain ATCC 9150 / SARB42)).